Reading from the N-terminus, the 91-residue chain is Small ribosomal subunit protein uS19 (91 aa).

This sequence belongs to the universal ribosomal protein uS19 family.

Protein S19 forms a complex with S13 that binds strongly to the 16S ribosomal RNA. The sequence is that of Small ribosomal subunit protein uS19 from Psychrobacter sp. (strain PRwf-1).